The sequence spans 342 residues: Phenylalanine--tRNA ligase alpha subunit (342 aa).

Glu257 is a binding site for Mg(2+).

The protein belongs to the class-II aminoacyl-tRNA synthetase family. Phe-tRNA synthetase alpha subunit type 1 subfamily. In terms of assembly, tetramer of two alpha and two beta subunits. Mg(2+) is required as a cofactor.

Its subcellular location is the cytoplasm. It catalyses the reaction tRNA(Phe) + L-phenylalanine + ATP = L-phenylalanyl-tRNA(Phe) + AMP + diphosphate + H(+). The sequence is that of Phenylalanine--tRNA ligase alpha subunit from Legionella pneumophila subsp. pneumophila (strain Philadelphia 1 / ATCC 33152 / DSM 7513).